Consider the following 358-residue polypeptide: Ornithine cyclodeaminase (358 aa).

Residues arginine 52 and lysine 76 each contribute to the L-ornithine site. NAD(+) contacts are provided by residues threonine 91, arginine 119, 146–147 (AQ), aspartate 168, threonine 208, 231–234 (VGGD), lysine 238, and serine 299. An L-ornithine-binding site is contributed by arginine 119. L-ornithine is bound at residue aspartate 234. Aspartate 234 functions as the Proton donor/acceptor in the catalytic mechanism. L-ornithine is bound at residue valine 300.

This sequence belongs to the ornithine cyclodeaminase/mu-crystallin family. NAD(+) is required as a cofactor.

It carries out the reaction L-ornithine = L-proline + NH4(+). It functions in the pathway amino-acid biosynthesis; L-proline biosynthesis; L-proline from L-ornithine: step 1/1. In terms of biological role, catalyzes the conversion of L-ornithine into L-proline with release of ammonia. This chain is Ornithine cyclodeaminase, found in Brucella suis biovar 1 (strain 1330).